A 400-amino-acid polypeptide reads, in one-letter code: Aspartate aminotransferase (400 aa).

L-aspartate-binding residues include glycine 42 and asparagine 180. Lysine 241 carries the N6-(pyridoxal phosphate)lysine modification. Arginine 373 provides a ligand contact to L-aspartate.

This sequence belongs to the class-I pyridoxal-phosphate-dependent aminotransferase family. In terms of assembly, homodimer. It depends on pyridoxal 5'-phosphate as a cofactor.

Its subcellular location is the cytoplasm. It catalyses the reaction L-aspartate + 2-oxoglutarate = oxaloacetate + L-glutamate. The sequence is that of Aspartate aminotransferase (aspC) from Sulfolobus acidocaldarius (strain ATCC 33909 / DSM 639 / JCM 8929 / NBRC 15157 / NCIMB 11770).